Consider the following 236-residue polypeptide: Eukaryotic translation initiation factor 3 subunit J (236 aa).

The segment at 1-65 is disordered; sequence MADDWESAAD…APAKPKPNKA (65 aa). The span at 28–46 shows a compositional bias: acidic residues; that stretch reads GEDEDEDIKDSWEDEEEKK. Residues 47–58 show a composition bias toward basic and acidic residues; that stretch reads DEEKPTKTEAPA.

The protein belongs to the eIF-3 subunit J family. In terms of assembly, component of the eukaryotic translation initiation factor 3 (eIF-3) complex. The eIF-3 complex interacts with pix.

The protein resides in the cytoplasm. Its function is as follows. Component of the eukaryotic translation initiation factor 3 (eIF-3) complex, which is involved in protein synthesis of a specialized repertoire of mRNAs and, together with other initiation factors, stimulates binding of mRNA and methionyl-tRNAi to the 40S ribosome. The eIF-3 complex specifically targets and initiates translation of a subset of mRNAs involved in cell proliferation. The polypeptide is Eukaryotic translation initiation factor 3 subunit J (Drosophila melanogaster (Fruit fly)).